The sequence spans 319 residues: Beta-ketoacyl-[acyl-carrier-protein] synthase III (319 aa).

Catalysis depends on residues C113 and H246. Positions 247–251 (QANIR) are ACP-binding. The active site involves N276.

The protein belongs to the thiolase-like superfamily. FabH family. In terms of assembly, homodimer.

It localises to the cytoplasm. The enzyme catalyses malonyl-[ACP] + acetyl-CoA + H(+) = 3-oxobutanoyl-[ACP] + CO2 + CoA. Its pathway is lipid metabolism; fatty acid biosynthesis. Its function is as follows. Catalyzes the condensation reaction of fatty acid synthesis by the addition to an acyl acceptor of two carbons from malonyl-ACP. Catalyzes the first condensation reaction which initiates fatty acid synthesis and may therefore play a role in governing the total rate of fatty acid production. Possesses both acetoacetyl-ACP synthase and acetyl transacylase activities. Its substrate specificity determines the biosynthesis of branched-chain and/or straight-chain of fatty acids. The sequence is that of Beta-ketoacyl-[acyl-carrier-protein] synthase III from Ehrlichia ruminantium (strain Welgevonden).